The following is a 650-amino-acid chain: Chaperone protein DnaK (650 aa).

Thr200 is modified (phosphothreonine; by autocatalysis).

Belongs to the heat shock protein 70 family.

In terms of biological role, acts as a chaperone. This is Chaperone protein DnaK from Burkholderia orbicola (strain MC0-3).